The chain runs to 68 residues: Neuronal regeneration-related protein (68 aa).

The interval 21-54 (MEGRLPKGRLPVPKEVNRKKNDETNAASLTPLGS) is disordered. Residues 44–54 (TNAASLTPLGS) are compositionally biased toward polar residues.

In terms of assembly, interacts with the latency-associated peptides (LAP) of TGFB1 and TGFB2; the interaction results in a decrease in TGFB autoinduction. Interacts with FLNA. Phosphorylated on Ser-59. Phosphorylation decreases stability and activity.

It localises to the cytoplasm. Its function is as follows. May have roles in neural function and cellular differentiation. Ectopic expression promotes axonal regeneration, induces differentiation of fibroblast into myofibroblast, induces myofibroblast ameboid migration, augments motility of gliomas, and increases retinoic-acid regulation of lipid-droplet biogenesis. Down-regulates the expression of TGFB1 and TGFB2 but not of TGFB3. May play a role in the regulation of alveolar generation. This is Neuronal regeneration-related protein (NREP) from Macaca fascicularis (Crab-eating macaque).